A 151-amino-acid chain; its full sequence is Putative pre-16S rRNA nuclease (151 aa).

It belongs to the YqgF nuclease family.

The protein resides in the cytoplasm. Functionally, could be a nuclease involved in processing of the 5'-end of pre-16S rRNA. This Neisseria meningitidis serogroup B (strain ATCC BAA-335 / MC58) protein is Putative pre-16S rRNA nuclease.